A 361-amino-acid chain; its full sequence is Peptide chain release factor 1 (361 aa).

Gln-237 carries the N5-methylglutamine modification. Residues 285–306 (QAEQSAQQTEQRRQLVGSGDRS) are disordered.

It belongs to the prokaryotic/mitochondrial release factor family. In terms of processing, methylated by PrmC. Methylation increases the termination efficiency of RF1.

The protein localises to the cytoplasm. Peptide chain release factor 1 directs the termination of translation in response to the peptide chain termination codons UAG and UAA. This Alkalilimnicola ehrlichii (strain ATCC BAA-1101 / DSM 17681 / MLHE-1) protein is Peptide chain release factor 1.